The chain runs to 451 residues: Midnolin-B (451 aa).

Positions 20–94 (MNLNIQSTTG…LTLLPSVEAG (75 aa)) constitute a Ubiquitin-like domain. 3 disordered regions span residues 187–254 (ASCT…RSRK), 331–372 (RNAK…QTEN), and 388–427 (QKRL…EGSL). Composition is skewed to low complexity over residues 190-205 (TPGS…TSST), 237-250 (STRG…SPSS), and 336-347 (TSPQSTGPQQTT). Basic and acidic residues predominate over residues 363 to 372 (SGDRLRQTEN). Basic residues predominate over residues 388–397 (QKRLRRKARR). Residues 413–426 (RTSSNSSTSSGEGS) are compositionally biased toward low complexity.

It localises to the nucleus. The protein resides in the cytoplasm. Its subcellular location is the cytosol. The protein localises to the nucleolus. Functionally, facilitates ubiquitin-independent proteasomal degradation of polycomb protein CBX4. Plays a role in inhibiting the activity of glucokinase GCK and both glucose-induced and basal insulin secretion. The sequence is that of Midnolin-B (midn-b) from Xenopus laevis (African clawed frog).